The sequence spans 858 residues: Receptor-like protein kinase ANXUR2 (858 aa).

Positions 1–27 (MNEKLRILFSFLCFFYVLLVSPSQSNG) are cleaved as a signal peptide. Residues 28 to 431 (QDISLSCGAS…VKKDFQGDKR (404 aa)) are Extracellular-facing. Asn133, Asn293, Asn303, and Asn331 each carry an N-linked (GlcNAc...) asparagine glycan. A helical membrane pass occupies residues 432–452 (ITAFVIGSAGGVAAVLFCALC). Residues 453-858 (FTMYQRKRKF…FSQIVNPKGR (406 aa)) are Cytoplasmic-facing. In terms of domain architecture, Protein kinase spans 521-794 (FDESNVIGVG…GDVLWNLEFA (274 aa)). ATP-binding positions include 527–535 (IGVGGFGKV) and Lys549. Asp645 acts as the Proton acceptor in catalysis. Residues 800-858 (TADGSRHRTPSNGGGSVDLGGGGGGVTVNISAGESDLGDDLSSEENSGIFSQIVNPKGR) are disordered. The span at 811–825 (NGGGSVDLGGGGGGV) shows a compositional bias: gly residues. Residues 843–858 (EENSGIFSQIVNPKGR) are compositionally biased toward polar residues.

This sequence belongs to the protein kinase superfamily. Ser/Thr protein kinase family. In terms of tissue distribution, expressed in pollen, but not in pistils or seedlings.

It is found in the cell membrane. It catalyses the reaction L-seryl-[protein] + ATP = O-phospho-L-seryl-[protein] + ADP + H(+). The catalysed reaction is L-threonyl-[protein] + ATP = O-phospho-L-threonyl-[protein] + ADP + H(+). Functionally, receptor-like protein kinase that controls pollen tube behavior by directing rupture at proper timing to release the sperm cell. The chain is Receptor-like protein kinase ANXUR2 (ANX2) from Arabidopsis thaliana (Mouse-ear cress).